Here is a 671-residue protein sequence, read N- to C-terminus: tRNA(Met) cytidine acetyltransferase TmcA (671 aa).

ATP-binding positions include Gln180, 202–211, and Arg319; that span reads GRGKSALAGQ. The N-acetyltransferase domain maps to 356-531; it reads QTLWRSEPET…SGCYTAMALL (176 aa). Acetyl-CoA-binding positions include 461-463, 468-474, Glu499, and Arg506; these read IAV and QREGTGR.

Belongs to the RNA cytidine acetyltransferase family. TmcA subfamily.

It is found in the cytoplasm. The catalysed reaction is cytidine(34) in elongator tRNA(Met) + acetyl-CoA + ATP + H2O = N(4)-acetylcytidine(34) in elongator tRNA(Met) + ADP + phosphate + CoA + H(+). Catalyzes the formation of N(4)-acetylcytidine (ac(4)C) at the wobble position of tRNA(Met), by using acetyl-CoA as an acetyl donor and ATP (or GTP). The sequence is that of tRNA(Met) cytidine acetyltransferase TmcA from Shigella flexneri serotype 5b (strain 8401).